A 166-amino-acid chain; its full sequence is Cyclic pyranopterin monophosphate synthase (166 aa).

Substrate-binding positions include 75–77 (MCH) and 115–116 (ME). Aspartate 130 is an active-site residue.

It belongs to the MoaC family. In terms of assembly, homohexamer; trimer of dimers.

It catalyses the reaction (8S)-3',8-cyclo-7,8-dihydroguanosine 5'-triphosphate = cyclic pyranopterin phosphate + diphosphate. It participates in cofactor biosynthesis; molybdopterin biosynthesis. Catalyzes the conversion of (8S)-3',8-cyclo-7,8-dihydroguanosine 5'-triphosphate to cyclic pyranopterin monophosphate (cPMP). This Shouchella clausii (strain KSM-K16) (Alkalihalobacillus clausii) protein is Cyclic pyranopterin monophosphate synthase.